The following is a 1387-amino-acid chain: MEDLMTSYSFTEKKRIRKDFGKQRSILEVPFLLAIQVDSYREFLQEDVEPNKRKDLGLHAALKSVFPISSYSGNAALEYVGYKLGEPVFDERECRQRGMSYGAPLRVTVRLVIYDRESSTKAIKYVKEQEVYLGEIPLMTENGTFIVNGTERVIFSQLHRSPGVFFDHDRGKTHSSGKLLYSARIIPYRGSWLDFEFDPKDALFTRIDRRRKLPVSILLRALGYNNEEMLAEFFEINTFHINPDEGVQLELVPERLRGETLNFDLADGDKVIVEAGKRITARHVKQLEAAGVAALAVPDDYLVGRILSHDVVDGSTGELLANANDEISEDQLAAFRKAGVDAVGTLWVNDLDRGPYLSNTLRIDPTKTQLEALVEIYRMMRPGEPPTKEAAQNLFHNLFFTFERYDLSTVGRMKFNRRVGRKEVLGESVLYDKKYFAERNDEESKRLVAEHADTSDILEVIKVLTEIRNGRGVVDDIDHLGNRRVRSVGEMAENVFRVGLVRVERAVKERLSMAESEGLTPQELINAKPVAAAIKEFFGSSQLSQFMDQNNPLSEVTHKRRVSALGPGGLTRERAGFEVRDVHPTHYGRVCTIETPEGPNIGLINSLAVFARTNQYGFLETPYRKVLDGKVSDDVEYLSAIEENEYVIAQANALTDAKNMLTEQFVPCRFQGESLLKPPAEVHFMDVSPMQTVSVAAALVPFLEHDDANRALMGANMQRQAVPTLRSQKPLVGTGIERAVARDSGVTVNARRGGVIEQIDAARIVVKVNEAEIGGGTDAGVDIYNLIKYTRSNQNTCINQRPLVNVGDVIARGDVLADGPSTDIGELALGQNMLIAFMPWNGYNFEDSILLSERVVEEDRYTTIHIEELTCVARDTKLGPEEISADIPNVSEQALNRLDESGVVYIGAEVRAGDIMVGKVTPKGESQLTPEEKLLRAIFGEKASDVKDSSLRVPPGMDGTVIDVQVFTRDGIEKDKRARQIEESEIKRVKKDFDDQFRILEAAIYARLRSQIVGKVANGGPNLKKGDNVTDAYLDGLKKSDWFQLRMKDDDAADAIERAQKQIQAHEKEFEARFADKRGKITQGDDLAPGVLKMVKVFLAVKRRIQPGDKMAGRHGNKGVVSNVVPVEDMPYMATGEPVDIVLNPLGVPSRMNIGQILEVHLGWAAKGLGRKIQRMLEAQTAVSELRKFLDDIYNHDSAINAERVDLSQFSDEELLNLGKNLIDGVPMATPVFDGASEAEIKRMLELAELPQSGQTQLYDGRTGEAFDRKTTVGYMHYLKLNHLVDDKMHARSTGPYSLVTQQPLGGKAQFGGQRFGEMEVWALEAYGAAYTLQEMLTVKSDDVQGRNQMYKNIVDGEHEMVAGMPESFNVLVKEIRSLAINMELEE.

This sequence belongs to the RNA polymerase beta chain family. The RNAP catalytic core consists of 2 alpha, 1 beta, 1 beta' and 1 omega subunit. When a sigma factor is associated with the core the holoenzyme is formed, which can initiate transcription.

It carries out the reaction RNA(n) + a ribonucleoside 5'-triphosphate = RNA(n+1) + diphosphate. Its function is as follows. DNA-dependent RNA polymerase catalyzes the transcription of DNA into RNA using the four ribonucleoside triphosphates as substrates. This chain is DNA-directed RNA polymerase subunit beta, found in Xanthomonas campestris pv. campestris (strain ATCC 33913 / DSM 3586 / NCPPB 528 / LMG 568 / P 25).